The primary structure comprises 177 residues: Thymidine kinase (177 aa).

11–18 contributes to the ATP binding site; it reads GPMFSGKS. Glu-83 serves as the catalytic Proton acceptor. Residue Phe-113 participates in substrate binding. Positions 138 and 141 each coordinate Zn(2+). 157-161 contributes to the substrate binding site; the sequence is IEIIG. Residues Cys-170 and Cys-173 each contribute to the Zn(2+) site.

It belongs to the thymidine kinase family. In terms of assembly, homotetramer. Two molecules of substrate bind to each enzyme tetramer.

The enzyme catalyses thymidine + ATP = dTMP + ADP + H(+). Functionally, phosphorylates thymidine and thymidine analogs, such as azidothymidine (AZT). Part of the salvage pathway for pyrimidine deoxyribonucleotide synthesis. This is Thymidine kinase (OPG101) from Homo sapiens (Human).